Reading from the N-terminus, the 223-residue chain is Adenylate kinase (223 aa).

10–15 (GSGKGT) lines the ATP pocket. Positions 30–59 (ESGAIFRQHIGGGTELGKKAKEYIDRGDLV) are NMP. AMP is bound by residues S31, R36, 57–59 (DLV), 84–87 (GFPR), and Q91. Positions 125-164 (GRRLCKNDNNHPNNIFIDAIKPDGDVCRVCGGSLSARADD) are LID. R126 is an ATP binding site. The AMP site is built by R161 and R173. G209 provides a ligand contact to ATP.

The protein belongs to the adenylate kinase family. In terms of assembly, monomer.

The protein resides in the cytoplasm. The catalysed reaction is AMP + ATP = 2 ADP. It functions in the pathway purine metabolism; AMP biosynthesis via salvage pathway; AMP from ADP: step 1/1. In terms of biological role, catalyzes the reversible transfer of the terminal phosphate group between ATP and AMP. Plays an important role in cellular energy homeostasis and in adenine nucleotide metabolism. This is Adenylate kinase from Nitratidesulfovibrio vulgaris (strain DSM 19637 / Miyazaki F) (Desulfovibrio vulgaris).